We begin with the raw amino-acid sequence, 290 residues long: Signal recognition particle receptor subunit beta (290 aa).

A helical transmembrane segment spans residues 44-64 (VLLLALFTLIFIIIISKLFGS). Residues 92-100 (GLSNAGKTA), 114-117 (THTS), glycine 140, and alanine 268 contribute to the GTP site.

This sequence belongs to the SRP receptor beta subunit family. Heterodimer of an alpha and a beta chain.

The protein resides in the endoplasmic reticulum membrane. Functionally, component of the signal recognition particle (SRP) complex receptor (SR). Ensures, in conjunction with the SRP complex, the correct targeting of the nascent secretory proteins to the endoplasmic reticulum membrane system. May mediate the membrane association of SR. The chain is Signal recognition particle receptor subunit beta (srprb) from Dictyostelium discoideum (Social amoeba).